Here is a 376-residue protein sequence, read N- to C-terminus: Penicillin V acylase (376 aa).

Residues 1–29 (MIKNNKRIKSTVCALSLVALTLGSAVSLA) form the signal peptide. The active-site Nucleophile is the Cys30.

The protein belongs to the peptidase C59 family. In terms of assembly, homotetramer. Dimer of dimers.

Its subcellular location is the periplasm. It carries out the reaction a penicillin + H2O = 6-aminopenicillanate + a carboxylate. With respect to regulation, exhibits uncharacteristic kinetic behavior, showing positive cooperativity coupled with substrate inhibition. Penicillin acylase activity is enhanced in the presence of the reducing agent DTT, indicating active sulfhydryl group in the enzyme. Also shows enhanced activity in presence of organic solvents and detergents. Inhibited largely in presence of Ag(+), Hg(2+) and Cd(2+) ions, which have strong affinities for sulfhydryl groups. Activity is also inhibited by bile salts. Catalyzes the hydrolysis of penicillin V to 6-aminopenicillanate (6-APA). Shows high specificity towards penicillin V. Can use other beta-lactam substrates, including penicillin G, ampicillin, cephalexin, cloxacillin and dicloxacillin, but at a rate less than 10% of that of penicillin V. Does not show any activity with glyco- or tauro-conjugated bile salts. This chain is Penicillin V acylase, found in Pectobacterium atrosepticum (strain SCRI 1043 / ATCC BAA-672) (Erwinia carotovora subsp. atroseptica).